Reading from the N-terminus, the 171-residue chain is Adenine phosphoribosyltransferase (171 aa).

This sequence belongs to the purine/pyrimidine phosphoribosyltransferase family. In terms of assembly, homodimer.

The protein resides in the cytoplasm. The catalysed reaction is AMP + diphosphate = 5-phospho-alpha-D-ribose 1-diphosphate + adenine. It functions in the pathway purine metabolism; AMP biosynthesis via salvage pathway; AMP from adenine: step 1/1. Functionally, catalyzes a salvage reaction resulting in the formation of AMP, that is energically less costly than de novo synthesis. This Rhodospirillum centenum (strain ATCC 51521 / SW) protein is Adenine phosphoribosyltransferase.